A 125-amino-acid polypeptide reads, in one-letter code: Small ribosomal subunit protein uS12 (125 aa).

Residues 1 to 28 (MPTINQLVRKGREKVKKKSKAPALEGNP) form a disordered region. Basic residues predominate over residues 9–20 (RKGREKVKKKSK). Asp89 bears the 3-methylthioaspartic acid mark. Residues 104–125 (AAGVKDRKQSRSKYGTKRPKEK) are disordered. Over residues 113–125 (SRSKYGTKRPKEK) the composition is skewed to basic residues.

The protein belongs to the universal ribosomal protein uS12 family. In terms of assembly, part of the 30S ribosomal subunit. Contacts proteins S8 and S17. May interact with IF1 in the 30S initiation complex.

In terms of biological role, with S4 and S5 plays an important role in translational accuracy. Its function is as follows. Interacts with and stabilizes bases of the 16S rRNA that are involved in tRNA selection in the A site and with the mRNA backbone. Located at the interface of the 30S and 50S subunits, it traverses the body of the 30S subunit contacting proteins on the other side and probably holding the rRNA structure together. The combined cluster of proteins S8, S12 and S17 appears to hold together the shoulder and platform of the 30S subunit. This chain is Small ribosomal subunit protein uS12, found in Persephonella marina (strain DSM 14350 / EX-H1).